Here is a 173-residue protein sequence, read N- to C-terminus: ATP-dependent protease subunit HslV (173 aa).

The active site involves T2. Na(+) contacts are provided by G158, D161, and T164.

This sequence belongs to the peptidase T1B family. HslV subfamily. A double ring-shaped homohexamer of HslV is capped on each side by a ring-shaped HslU homohexamer. The assembly of the HslU/HslV complex is dependent on binding of ATP.

The protein localises to the cytoplasm. It catalyses the reaction ATP-dependent cleavage of peptide bonds with broad specificity.. Its activity is regulated as follows. Allosterically activated by HslU binding. In terms of biological role, protease subunit of a proteasome-like degradation complex believed to be a general protein degrading machinery. The chain is ATP-dependent protease subunit HslV from Mannheimia succiniciproducens (strain KCTC 0769BP / MBEL55E).